The following is a 187-amino-acid chain: Peptidyl-tRNA hydrolase (187 aa).

Tyr-15 provides a ligand contact to tRNA. The active-site Proton acceptor is the His-20. TRNA is bound by residues Phe-65, Asn-67, and Asn-113.

The protein belongs to the PTH family. Monomer.

The protein resides in the cytoplasm. It catalyses the reaction an N-acyl-L-alpha-aminoacyl-tRNA + H2O = an N-acyl-L-amino acid + a tRNA + H(+). Hydrolyzes ribosome-free peptidyl-tRNAs (with 1 or more amino acids incorporated), which drop off the ribosome during protein synthesis, or as a result of ribosome stalling. In terms of biological role, catalyzes the release of premature peptidyl moieties from peptidyl-tRNA molecules trapped in stalled 50S ribosomal subunits, and thus maintains levels of free tRNAs and 50S ribosomes. This Methylococcus capsulatus (strain ATCC 33009 / NCIMB 11132 / Bath) protein is Peptidyl-tRNA hydrolase.